The chain runs to 61 residues: Temporin-ALj (61 aa).

The N-terminal stretch at 1–22 is a signal peptide; it reads MFTLKKSLLLLFFLATINLSFC. Residues 23–46 constitute a propeptide that is removed on maturation; the sequence is EQERNAEEERRDEPDERNAEVEKR. Leucine 59 carries the post-translational modification Leucine amide.

Belongs to the frog skin active peptide (FSAP) family. Temporin subfamily. In terms of tissue distribution, expressed by the skin glands.

Its subcellular location is the secreted. In terms of biological role, antimicrobial peptide with activity against Gram-positive and Gram-negative bacteria and against fungi. Has been tested against S.aureus (MIC=7.5 ug/mL), B.pumilus (MIC=15.0 ug/mL), B.cereus (MIC=75.0 ug/mL), E.coli (MIC=15.0 ug/mL), B.dysenteriae (MIC=30.0 ug/mL), A.cacoaceticus (MIC=60.0 ug/mL), P.aeruginosa (MIC=7.5 ug/mL) and C.albicans (MIC=5.0 ug/mL). Also shows a weak hemolytic activity. The chain is Temporin-ALj from Amolops loloensis (Lolokou Sucker Frog).